The sequence spans 378 residues: 3-dehydroquinate synthase (378 aa).

Residues 115–119 (GVVGD), 139–140 (TS), K152, and K161 contribute to the NAD(+) site. Residues E194, H256, and H275 each contribute to the Zn(2+) site.

Belongs to the sugar phosphate cyclases superfamily. Dehydroquinate synthase family. Requires Co(2+) as cofactor. Zn(2+) serves as cofactor. The cofactor is NAD(+).

Its subcellular location is the cytoplasm. It catalyses the reaction 7-phospho-2-dehydro-3-deoxy-D-arabino-heptonate = 3-dehydroquinate + phosphate. It functions in the pathway metabolic intermediate biosynthesis; chorismate biosynthesis; chorismate from D-erythrose 4-phosphate and phosphoenolpyruvate: step 2/7. Its function is as follows. Catalyzes the conversion of 3-deoxy-D-arabino-heptulosonate 7-phosphate (DAHP) to dehydroquinate (DHQ). This chain is 3-dehydroquinate synthase, found in Brucella abortus biovar 1 (strain 9-941).